Consider the following 867-residue polypeptide: MNKTTEYIDALPLTVAEKATLPATDIRTLHETLNPEHHDYAREDDSPLGSVKARLEQSWPDSLVNRQLTEDDEGRTQLETMPKATRSSISPDPWRTNPIGRFWDHLRGHNATPHHVSRLTKEEQAHEQKWCTVGTIRRYILLLLTFSQTALATWYMKTILPYQGWALIDPIDMIGQDIWISFMQLLPYILQSGILILFAILFCWISAGFWTALMGFLQLLIGKDKYSISASLAGDVPINPEHRTALIMPICNEDVDRVFAGLRATWESVKATNQQQHFDIYILSDSYDPDICVAEQKAWIELLAEVQDKGQIFYRRRGRRVKRKSGNIDDFCRRWGSQYSYMVVLDADSVMSGECLTSLVRLMEANPNAGIIQSWPRASGMDTFYARCQQFATRVYGPLFTAGLHFWQLGESHYWGHNAIIRVQPFIEHCTLALLPGEGTFAGSILSHDFVEAALMRRAGWGVWIAYDLPGSYEELPPNLLDELKRDRRWCHGNLMNFRLFLVKGLHPVHRAVFLTGVMSYLSAPLWFMFLALSTALQVVHAFTEPHYFLQPHQLFPVWPQWQPELAIALLASTMVLLFLPKLLSILLIWCKGTKEYGGFIRVTISLLLEVILSVLLAPVRMLFHTVFVVSAFLGWKVAWKSPQRDDDSTTWREAFMRHGSQLLLGLVWATGMAWLDLRFLFWLAPIVFSLILSPFVSVFSSRASVGLRAKRWKLLLIPEEYSPPKVLVDTDNYLMMNRNRTLNDGFMHAVFHPSFNALTTATATARHRKSKVLEIARDHHIEQALNEPPDKLNRDCRLTLLSDPVIMSRLHYCVWAMPEKYASWVNHYQQLTLNPSALKQCEPNIEEEADYAEPTAQIDMALPGTP.

The disordered stretch occupies residues 71 to 91; it reads DDEGRTQLETMPKATRSSISP. Helical transmembrane passes span 139-156, 194-216, 518-540, 568-590, 603-625, and 680-702; these read YILLLLTFSQTALATWYM, ILILFAILFCWISAGFWTALMGF, VMSYLSAPLWFMFLALSTALQVV, IALLASTMVLLFLPKLLSILLIW, VTISLLLEVILSVLLAPVRMLFH, and FLFWLAPIVFSLILSPFVSVFSS.

It belongs to the glycosyltransferase 2 family. OpgH subfamily.

The protein resides in the cell inner membrane. It participates in glycan metabolism; osmoregulated periplasmic glucan (OPG) biosynthesis. Functionally, involved in the biosynthesis of osmoregulated periplasmic glucans (OPGs). This is Glucans biosynthesis glucosyltransferase H from Nitrosomonas europaea (strain ATCC 19718 / CIP 103999 / KCTC 2705 / NBRC 14298).